Consider the following 154-residue polypeptide: uncharacterized protein (154 aa).

The Zn(2+) site is built by C4, C7, C16, C19, C24, C28, H32, and C36. An HIT-type zinc finger spans residues 4–36 (CSICNESEIKYKCPKCSFPYCSLPCWKIHQSQC).

This is an uncharacterized protein from Schizosaccharomyces pombe (strain 972 / ATCC 24843) (Fission yeast).